Reading from the N-terminus, the 295-residue chain is 4-hydroxy-tetrahydrodipicolinate synthase (295 aa).

Threonine 45 is a binding site for pyruvate. Tyrosine 131 (proton donor/acceptor) is an active-site residue. Catalysis depends on lysine 159, which acts as the Schiff-base intermediate with substrate. Valine 202 provides a ligand contact to pyruvate.

It belongs to the DapA family. As to quaternary structure, homotetramer; dimer of dimers.

The protein localises to the cytoplasm. It catalyses the reaction L-aspartate 4-semialdehyde + pyruvate = (2S,4S)-4-hydroxy-2,3,4,5-tetrahydrodipicolinate + H2O + H(+). The protein operates within amino-acid biosynthesis; L-lysine biosynthesis via DAP pathway; (S)-tetrahydrodipicolinate from L-aspartate: step 3/4. Functionally, catalyzes the condensation of (S)-aspartate-beta-semialdehyde [(S)-ASA] and pyruvate to 4-hydroxy-tetrahydrodipicolinate (HTPA). The protein is 4-hydroxy-tetrahydrodipicolinate synthase of Methanothrix thermoacetophila (strain DSM 6194 / JCM 14653 / NBRC 101360 / PT) (Methanosaeta thermophila).